Here is a 326-residue protein sequence, read N- to C-terminus: Cobalamin biosynthesis protein CobD (326 aa).

4 helical membrane passes run 58–78, 81–101, 157–177, and 304–324; these read MRGVATILILLAASILLGVVL, LFDVLGAVGFILEAITVAVFL, FSDGVVAPALWYAVAGLPGLL, and VFYRACTTLAAASAVLVLPFL.

This sequence belongs to the CobD/CbiB family.

The protein localises to the cell membrane. It participates in cofactor biosynthesis; adenosylcobalamin biosynthesis. Converts cobyric acid to cobinamide by the addition of aminopropanol on the F carboxylic group. This is Cobalamin biosynthesis protein CobD from Sinorhizobium fredii (strain NBRC 101917 / NGR234).